The following is a 543-amino-acid chain: Carotenoid 9,10(9',10')-cleavage dioxygenase 1 (543 aa).

Fe cation-binding residues include His224, His272, His338, and His528.

Belongs to the carotenoid oxygenase family. As to quaternary structure, homodimer. Fe(2+) serves as cofactor.

It catalyses the reaction all-trans-zeaxanthin + 2 O2 = 4,9-dimethyldodeca-2,4,6,8,10-pentaenedial + 2 (3R)-hydroxy-beta-ionone. Functionally, cleaves a variety of carotenoids at the 9-10 and 9'-10' double bonds. Probably not involved in abscisic acid biosynthesis. The chain is Carotenoid 9,10(9',10')-cleavage dioxygenase 1 (CCD1) from Phaseolus vulgaris (Kidney bean).